We begin with the raw amino-acid sequence, 414 residues long: Eukaryotic initiation factor 4A-III-B (414 aa).

A Q motif motif is present at residues 41 to 69 (PTFDTMGLREDLLRGIYAYGFEKPSAIQQ). Residues Lys-63, Gln-68, 85 to 92 (SQSGTGKT), and 88 to 93 (GTGKTA) contribute to the ATP site. In terms of domain architecture, Helicase ATP-binding spans 72-242 (IKQIIKGRDV…NKFMTDPIRI (171 aa)). The short motif at 190–193 (DEAD) is the DEAD box element. The Helicase C-terminal domain occupies 253-414 (GIKQFFVAVE…EMPMNVADLI (162 aa)). Residues Asp-345 and 370–374 (RSGRY) contribute to the ATP site.

It belongs to the DEAD box helicase family. Identified in the spliceosome C complex. Part of the mRNA splicing-dependent exon junction complex (EJC) complex; the core complex contains casc3, eif4a3, magoh and rbm8a.

It is found in the nucleus. Its subcellular location is the nucleus speckle. The protein localises to the cytoplasm. The enzyme catalyses ATP + H2O = ADP + phosphate + H(+). ATP-dependent RNA helicase. Involved in pre-mRNA splicing as component of the spliceosome. Core component of the splicing-dependent multiprotein exon junction complex (EJC) deposited at splice junctions on mRNAs. The EJC is a dynamic structure consisting of core proteins and several peripheral nuclear and cytoplasmic associated factors that join the complex only transiently either during EJC assembly or during subsequent mRNA metabolism. The EJC marks the position of the exon-exon junction in the mature mRNA for the gene expression machinery and the core components remain bound to spliced mRNAs throughout all stages of mRNA metabolism thereby influencing downstream processes including nuclear mRNA export, subcellular mRNA localization, translation efficiency and nonsense-mediated mRNA decay (NMD). Binds spliced mRNA in sequence-independent manner, 20-24 nucleotides upstream of mRNA exon-exon junctions. Involved in craniofacial development. When overexpressed, induces epidermis in dissociated cells that would otherwise adopt a neural fate, a process that requires an active BMP signaling pathway. The chain is Eukaryotic initiation factor 4A-III-B (eif4a3-b) from Xenopus laevis (African clawed frog).